The primary structure comprises 98 residues: Feather beta keratin (98 aa).

Ser-2 is subject to N-acetylserine.

This sequence belongs to the avian keratin family. The avian keratins (F-ker, S-ker, C-ker and B-ker) are a complex mixture of very similar polypeptides.

The polypeptide is Feather beta keratin (Mycteria americana (Wood stork)).